Consider the following 167-residue polypeptide: Peptidoglycan L-alanyl-D-glutamate endopeptidase CwlK (167 aa).

Residues 1 to 26 (MNLPAKTFVILCILFLLDLCFSYIRH) form the signal peptide.

This sequence belongs to the peptidase M15C family.

The protein resides in the cell membrane. Functionally, cleaves the linkage of the L-alanine-D-glutamic acid of B.subtilis cell wall. This chain is Peptidoglycan L-alanyl-D-glutamate endopeptidase CwlK (cwlK), found in Bacillus subtilis (strain 168).